A 331-amino-acid polypeptide reads, in one-letter code: Probable staphylococcal-like nuclease CAN1 (331 aa).

The N-myristoyl glycine moiety is linked to residue Gly2. Cys10 carries the S-palmitoyl cysteine lipid modification. Positions 136–313 (HTLPVDAKAV…QSGRKGLWAA (178 aa)) constitute a TNase-like domain. Ca(2+) is bound at residue Asp149. The active site involves Arg220. Asp225 contacts Ca(2+). Active-site residues include Glu228 and Arg262. The disordered stretch occupies residues 306–331 (GRKGLWAASRPQKPWEWRRDKRNGTA). Positions 318-331 (KPWEWRRDKRNGTA) are enriched in basic and acidic residues.

This sequence belongs to the thermonuclease family. Ca(2+) serves as cofactor.

It is found in the cell membrane. Its function is as follows. Enzyme that catalyzes the hydrolysis of both DNA and RNA at the 5' position of the phosphodiester bond. This chain is Probable staphylococcal-like nuclease CAN1, found in Oryza sativa subsp. japonica (Rice).